Reading from the N-terminus, the 214-residue chain is uncharacterized protein (214 aa).

Residues 1–17 (MLKKIIILFLGVFVLSG) form the signal peptide. A lipid anchor (N-palmitoyl cysteine) is attached at C18. The S-diacylglycerol cysteine moiety is linked to residue C18. Acidic residues predominate over residues 64 to 77 (DNLDDPEDDDDDYD). Disordered regions lie at residues 64–83 (DNLD…LRGE), 106–138 (YKAE…KERK), and 166–197 (TANQ…SKVK). Residues 120 to 162 (TLSKANKKVRKDNTDKERKMQEELDQIKAMLRETKRDISKYTC) are a coiled coil.

It is found in the cell membrane. This is an uncharacterized protein from Rickettsia bellii (strain RML369-C).